We begin with the raw amino-acid sequence, 349 residues long: Phosphoribosylformylglycinamidine cyclo-ligase (349 aa).

It belongs to the AIR synthase family.

The protein localises to the cytoplasm. It carries out the reaction 2-formamido-N(1)-(5-O-phospho-beta-D-ribosyl)acetamidine + ATP = 5-amino-1-(5-phospho-beta-D-ribosyl)imidazole + ADP + phosphate + H(+). It functions in the pathway purine metabolism; IMP biosynthesis via de novo pathway; 5-amino-1-(5-phospho-D-ribosyl)imidazole from N(2)-formyl-N(1)-(5-phospho-D-ribosyl)glycinamide: step 2/2. The chain is Phosphoribosylformylglycinamidine cyclo-ligase from Listeria monocytogenes serotype 4a (strain HCC23).